The sequence spans 267 residues: NAD kinase (267 aa).

Catalysis depends on D45, which acts as the Proton acceptor. Residues 45-46, 121-122, K147, D149, 160-165, and A184 each bind NAD(+); these read DG, NE, and TAYSKS.

It belongs to the NAD kinase family. Requires a divalent metal cation as cofactor.

It is found in the cytoplasm. It catalyses the reaction NAD(+) + ATP = ADP + NADP(+) + H(+). Functionally, involved in the regulation of the intracellular balance of NAD and NADP, and is a key enzyme in the biosynthesis of NADP. Catalyzes specifically the phosphorylation on 2'-hydroxyl of the adenosine moiety of NAD to yield NADP. The chain is NAD kinase from Lactobacillus gasseri (strain ATCC 33323 / DSM 20243 / BCRC 14619 / CIP 102991 / JCM 1131 / KCTC 3163 / NCIMB 11718 / NCTC 13722 / AM63).